A 250-amino-acid chain; its full sequence is 2,3-bisphosphoglycerate-dependent phosphoglycerate mutase (250 aa).

Residues 10–17 (RHGESQWN), 23–24 (TG), Arg62, 89–92 (ERHY), Lys100, 116–117 (RR), and 185–186 (GN) contribute to the substrate site. Residue His11 is the Tele-phosphohistidine intermediate of the active site. The active-site Proton donor/acceptor is Glu89.

The protein belongs to the phosphoglycerate mutase family. BPG-dependent PGAM subfamily. In terms of assembly, homodimer.

The catalysed reaction is (2R)-2-phosphoglycerate = (2R)-3-phosphoglycerate. It participates in carbohydrate degradation; glycolysis; pyruvate from D-glyceraldehyde 3-phosphate: step 3/5. Catalyzes the interconversion of 2-phosphoglycerate and 3-phosphoglycerate. The protein is 2,3-bisphosphoglycerate-dependent phosphoglycerate mutase of Yersinia enterocolitica serotype O:8 / biotype 1B (strain NCTC 13174 / 8081).